The sequence spans 280 residues: Extracellular metalloprotease GLRG_06286 (280 aa).

A signal peptide spans 1–17 (MQVTFTLVAALAGMASA). Residue N51 is glycosylated (N-linked (GlcNAc...) asparagine). H196 lines the Zn(2+) pocket. Residue E197 is part of the active site. A Zn(2+)-binding site is contributed by H200. Positions 217–236 (DSIADTPAQSSPSSGCPVGR) are disordered. An intrachain disulfide couples C232 to C259.

The protein belongs to the peptidase M43B family.

The protein localises to the secreted. In terms of biological role, secreted metalloproteinase that allows assimilation of proteinaceous substrates. The polypeptide is Extracellular metalloprotease GLRG_06286 (Colletotrichum graminicola (strain M1.001 / M2 / FGSC 10212) (Maize anthracnose fungus)).